Reading from the N-terminus, the 556-residue chain is Testis-specific protein 10-interacting protein (556 aa).

Residues 1–20 (MGQETNMLNAHQQLVRTSSG) show a composition bias toward polar residues. Disordered stretches follow at residues 1 to 102 (MGQE…SPRK) and 180 to 320 (CTSI…GPWD). The span at 75-85 (KDRRLRGRNKK) shows a compositional bias: basic residues. Composition is skewed to acidic residues over residues 213-225 (EPEE…LGAE) and 246-260 (LEEE…EAED). A compositionally biased stretch (basic residues) spans 266-278 (PWRRRTSSRRKGR). The segment covering 304–320 (EPQRRKPRAKELEGPWD) has biased composition (basic and acidic residues). Positions 387–463 (LRAWELQQRE…ELQGIQHRVQ (77 aa)) form a coiled coil. The segment at 503-556 (AGKRDMEGAPRRHRSHRSVGARMEPSSQSPPKMEPTGSQADQHFAPNPDQELSP) is disordered. The segment covering 527 to 543 (PSSQSPPKMEPTGSQAD) has biased composition (polar residues).

The sequence is that of Testis-specific protein 10-interacting protein (TSGA10IP) from Bos taurus (Bovine).